The primary structure comprises 154 residues: Cathelicidin-2 (154 aa).

An N-terminal signal peptide occupies residues 1-17 (MLSCWVLLLALLGGVCA). Positions 18-122 (LPAPLSYPQA…RCRDASSDPV (105 aa)) are excised as a propeptide. Intrachain disulfides connect cysteine 75–cysteine 86 and cysteine 97–cysteine 114.

The protein belongs to the cathelicidin family. Detected in trachea, lung, proventriculus, duodenum, jejunum, ileum, caeca, colon, caecal tonsil, bursa of Fabricius, kidney, ovary, testis, thymus, liver, spleen, bone marrow, skin, uropygial gland, muscle and brain.

Its subcellular location is the secreted. In terms of biological role, binds bacterial lipopolysaccharide (LPS). Has potent antimicrobial activity against Gram-positive and Gram-negative bacteria (in vitro). Has hemolytic activity (in vitro). May play a role in the innate immune response. This is Cathelicidin-2 (CATHL2) from Gallus gallus (Chicken).